The following is a 298-amino-acid chain: Bifunctional protein FolD (298 aa).

NADP(+) is bound by residues 165-167 (GRS), Ser190, and Ile231.

This sequence belongs to the tetrahydrofolate dehydrogenase/cyclohydrolase family. As to quaternary structure, homodimer.

The enzyme catalyses (6R)-5,10-methylene-5,6,7,8-tetrahydrofolate + NADP(+) = (6R)-5,10-methenyltetrahydrofolate + NADPH. It carries out the reaction (6R)-5,10-methenyltetrahydrofolate + H2O = (6R)-10-formyltetrahydrofolate + H(+). It functions in the pathway one-carbon metabolism; tetrahydrofolate interconversion. Its function is as follows. Catalyzes the oxidation of 5,10-methylenetetrahydrofolate to 5,10-methenyltetrahydrofolate and then the hydrolysis of 5,10-methenyltetrahydrofolate to 10-formyltetrahydrofolate. This Prochlorococcus marinus (strain MIT 9515) protein is Bifunctional protein FolD.